The chain runs to 241 residues: Uridylate kinase (241 aa).

15–18 (KLSG) is a binding site for ATP. The involved in allosteric activation by GTP stretch occupies residues 23–28 (GTEGFG). UMP is bound at residue Gly57. Positions 58 and 62 each coordinate ATP. UMP contacts are provided by residues Asp77 and 138 to 145 (TGNPFFTT). Residues Thr165, Phe171, and Asp174 each contribute to the ATP site.

It belongs to the UMP kinase family. Homohexamer.

It localises to the cytoplasm. The catalysed reaction is UMP + ATP = UDP + ADP. It participates in pyrimidine metabolism; CTP biosynthesis via de novo pathway; UDP from UMP (UMPK route): step 1/1. Its activity is regulated as follows. Allosterically activated by GTP. Inhibited by UTP. Catalyzes the reversible phosphorylation of UMP to UDP. The chain is Uridylate kinase from Escherichia coli O139:H28 (strain E24377A / ETEC).